Here is a 401-residue protein sequence, read N- to C-terminus: Argininosuccinate synthase (401 aa).

8-16 (AYSGGLDTS) is an ATP binding site. Y85 contributes to the L-citrulline binding site. G115 is an ATP binding site. L-aspartate-binding residues include T117, N121, and D122. N121 contributes to the L-citrulline binding site. The L-citrulline site is built by R125, S173, E258, and Y270.

It belongs to the argininosuccinate synthase family. Type 1 subfamily. Homotetramer.

The protein resides in the cytoplasm. The catalysed reaction is L-citrulline + L-aspartate + ATP = 2-(N(omega)-L-arginino)succinate + AMP + diphosphate + H(+). It functions in the pathway amino-acid biosynthesis; L-arginine biosynthesis; L-arginine from L-ornithine and carbamoyl phosphate: step 2/3. This Staphylococcus aureus (strain MRSA252) protein is Argininosuccinate synthase.